Here is a 253-residue protein sequence, read N- to C-terminus: 5'/3'-nucleotidase SurE (253 aa).

The a divalent metal cation site is built by Asp8, Asp9, Ser39, and Asn92.

It belongs to the SurE nucleotidase family. Requires a divalent metal cation as cofactor.

It is found in the cytoplasm. It carries out the reaction a ribonucleoside 5'-phosphate + H2O = a ribonucleoside + phosphate. The enzyme catalyses a ribonucleoside 3'-phosphate + H2O = a ribonucleoside + phosphate. The catalysed reaction is [phosphate](n) + H2O = [phosphate](n-1) + phosphate + H(+). Functionally, nucleotidase with a broad substrate specificity as it can dephosphorylate various ribo- and deoxyribonucleoside 5'-monophosphates and ribonucleoside 3'-monophosphates with highest affinity to 3'-AMP. Also hydrolyzes polyphosphate (exopolyphosphatase activity) with the preference for short-chain-length substrates (P20-25). Might be involved in the regulation of dNTP and NTP pools, and in the turnover of 3'-mononucleotides produced by numerous intracellular RNases (T1, T2, and F) during the degradation of various RNAs. This Escherichia coli O7:K1 (strain IAI39 / ExPEC) protein is 5'/3'-nucleotidase SurE.